The primary structure comprises 226 residues: UPF0502 protein Gbem_0194 (226 aa).

This sequence belongs to the UPF0502 family.

This is UPF0502 protein Gbem_0194 from Citrifermentans bemidjiense (strain ATCC BAA-1014 / DSM 16622 / JCM 12645 / Bem) (Geobacter bemidjiensis).